Reading from the N-terminus, the 234-residue chain is MGQEHRRKAVVLFSGGIDSTTCLAVAKAEGFEAYALSFFYHQRHGVEVEAARRSAPALGAREHLVLELPLDRIGGSALTGHEEVPKDVPVEKMSDRIPATYVPARNTIFLSFALAWAEVLGAADIFIGVNALDYSGYPDCRPEYIAAFERMANLAIRETVEGRMRIKVHTPLIRLTKGEIIKRGLELGLDYSLTHSCYDPDARGLACGHCDSCILRKKGFMEAGIPDPTRYVRD.

ATP is bound at residue 13 to 23 (FSGGIDSTTCL). Residues cysteine 197, cysteine 207, cysteine 210, and cysteine 213 each coordinate Zn(2+).

The protein belongs to the QueC family. The cofactor is Zn(2+).

The enzyme catalyses 7-carboxy-7-deazaguanine + NH4(+) + ATP = 7-cyano-7-deazaguanine + ADP + phosphate + H2O + H(+). It participates in purine metabolism; 7-cyano-7-deazaguanine biosynthesis. In terms of biological role, catalyzes the ATP-dependent conversion of 7-carboxy-7-deazaguanine (CDG) to 7-cyano-7-deazaguanine (preQ(0)). This chain is 7-cyano-7-deazaguanine synthase, found in Syntrophobacter fumaroxidans (strain DSM 10017 / MPOB).